The sequence spans 232 residues: Phosphatidylserine decarboxylase proenzyme (232 aa).

Catalysis depends on Ser-190, which acts as the Schiff-base intermediate with substrate; via pyruvic acid. Ser-190 is modified (pyruvic acid (Ser); by autocatalysis).

Belongs to the phosphatidylserine decarboxylase family. PSD-A subfamily. As to quaternary structure, heterodimer of a large membrane-associated beta subunit and a small pyruvoyl-containing alpha subunit. Requires pyruvate as cofactor. In terms of processing, is synthesized initially as an inactive proenzyme. Formation of the active enzyme involves a self-maturation process in which the active site pyruvoyl group is generated from an internal serine residue via an autocatalytic post-translational modification. Two non-identical subunits are generated from the proenzyme in this reaction, and the pyruvate is formed at the N-terminus of the alpha chain, which is derived from the carboxyl end of the proenzyme. The post-translation cleavage follows an unusual pathway, termed non-hydrolytic serinolysis, in which the side chain hydroxyl group of the serine supplies its oxygen atom to form the C-terminus of the beta chain, while the remainder of the serine residue undergoes an oxidative deamination to produce ammonia and the pyruvoyl prosthetic group on the alpha chain.

The protein localises to the cell membrane. It carries out the reaction a 1,2-diacyl-sn-glycero-3-phospho-L-serine + H(+) = a 1,2-diacyl-sn-glycero-3-phosphoethanolamine + CO2. The protein operates within phospholipid metabolism; phosphatidylethanolamine biosynthesis; phosphatidylethanolamine from CDP-diacylglycerol: step 2/2. Catalyzes the formation of phosphatidylethanolamine (PtdEtn) from phosphatidylserine (PtdSer). This is Phosphatidylserine decarboxylase proenzyme from Rhodopseudomonas palustris (strain BisB5).